Reading from the N-terminus, the 363-residue chain is DNA repair protein rlp1 (363 aa).

This sequence belongs to the RecA family. RAD51 subfamily. Interacts with rdl1 and sws1.

It is found in the cytoplasm. The protein localises to the nucleus. In terms of biological role, required for normal levels of meiotic recombination. Acts in the recombinational pathway of double-strand break (DSB) repair together with rhp51, rhp55 and rad22. Required for the full extent of DNA recombination and cell survival under condition of a replication fork collapse. The polypeptide is DNA repair protein rlp1 (Schizosaccharomyces pombe (strain 972 / ATCC 24843) (Fission yeast)).